Consider the following 798-residue polypeptide: ABC transporter G family member 4 (798 aa).

The segment at 1-51 is disordered; sequence MEDIGNNNFEIIDDKSDEKNDENFEDKNSRNNINEEQILSNQQQQQQQQQQ. A compositionally biased stretch (basic and acidic residues) spans 12 to 29; the sequence is IDDKSDEKNDENFEDKNS. The span at 30 to 41 shows a compositional bias: polar residues; sequence RNNINEEQILSN. The stretch at 34–83 forms a coiled coil; that stretch reads NEEQILSNQQQQQQQQQQQQQQQQQQQQQQQQQQQQQQEQQQFKNEVINT. Low complexity predominate over residues 42-51; it reads QQQQQQQQQQ. The ABC transporter domain maps to 211 to 464; the sequence is IDIEDIESQV…SIDSNYKCPP (254 aa). 253–260 is a binding site for ATP; it reads GPSGSGKS. 7 helical membrane passes run 540 to 560, 579 to 599, 628 to 648, 656 to 676, 687 to 707, 713 to 733, and 771 to 791; these read VVFF…SACF, LFFF…STFV, IVSS…IVHL, ILSL…VIAM, FSYC…LVPI, SFGW…IVII, and SIGI…IGLY. The ABC transmembrane type-2 domain maps to 540–793; it reads VVFFSKIVIA…ILAYIGLYKF (254 aa).

The protein belongs to the ABC transporter superfamily. ABCG family. Eye pigment precursor importer (TC 3.A.1.204) subfamily.

It is found in the membrane. This chain is ABC transporter G family member 4 (abcG4), found in Dictyostelium discoideum (Social amoeba).